The sequence spans 227 residues: Ribose-5-phosphate isomerase A (227 aa).

Substrate contacts are provided by residues 30–33 (TGST), 86–89 (DGAD), and 99–104 (KGMGGA). The active-site Proton acceptor is E108. K126 contributes to the substrate binding site.

Belongs to the ribose 5-phosphate isomerase family. Homodimer.

It catalyses the reaction aldehydo-D-ribose 5-phosphate = D-ribulose 5-phosphate. It participates in carbohydrate degradation; pentose phosphate pathway; D-ribose 5-phosphate from D-ribulose 5-phosphate (non-oxidative stage): step 1/1. Functionally, involved in the first step of the non-oxidative branch of the pentose phosphate pathway. It catalyzes the reversible conversion of ribose-5-phosphate to ribulose 5-phosphate. Can also act on D-ribose-5-diphosphate and D-ribose-5-triphosphate as substrate. The polypeptide is Ribose-5-phosphate isomerase A (Thermus thermophilus (strain ATCC BAA-163 / DSM 7039 / HB27)).